A 474-amino-acid polypeptide reads, in one-letter code: 4-aminobutyrate aminotransferase (474 aa).

Over residues 1 to 13 (MSSTATVTESTHF) the composition is skewed to polar residues. Residues 1–31 (MSSTATVTESTHFFPNEPQGPSIKTETIPGP) are disordered. 142 to 143 (GS) contacts pyridoxal 5'-phosphate. R199 contacts substrate. K333 bears the N6-(pyridoxal phosphate)lysine mark. T357 is a pyridoxal 5'-phosphate binding site.

It belongs to the class-III pyridoxal-phosphate-dependent aminotransferase family. Homodimer. Pyridoxal 5'-phosphate serves as cofactor.

The protein resides in the cytoplasm. The catalysed reaction is 4-aminobutanoate + 2-oxoglutarate = succinate semialdehyde + L-glutamate. Required for the degradation of gamma-aminobutyric acid (GABA), which is important for utilization of GABA as nitrogen source. Deaminates GABA to succinate-semialdehyde, which in turn is converted to succinate by the succinate semialdehyde dehydrogenase. Cannot transaminate beta-alanine (BAL). This Schizosaccharomyces pombe (strain 972 / ATCC 24843) (Fission yeast) protein is 4-aminobutyrate aminotransferase (uga1).